The chain runs to 407 residues: Membrane protein MosC (407 aa).

Residues 1–24 form a disordered region; that stretch reads MTRTSPRHHAPSETKRRVPMGGVH. The next 11 helical transmembrane spans lie at 31–51, 69–89, 109–129, 157–177, 186–206, 225–245, 255–275, 290–310, 316–336, 347–367, and 377–397; these read LTITAVAFQFFINGLVLAAWA, GVLLLIMAAGALLFMSLAGYF, ALVLIFAAPNCMTFLCSIVLF, AFLHGCSSTGILAGIMTFGVI, SVTLLTGILIVARWLFPHLLD, LLMFGILSFLTMVTDGAIAEW, QVTDQVGSLGYVAFTLLMIAG, ALIAISGSLASAGMTTALFMP, LAGFALLGLGMANLVPIIFSE, VGLTFVSVCGYSGFLVGPPII, and GRALLFIIAVGVIVACASVFF.

It localises to the cell membrane. Functionally, may be a membrane transport protein that could either transport a precursor for rhizopine biosynthesis into bacteroids or the finished product from the bacteroids. The protein is Membrane protein MosC (mosC) of Rhizobium meliloti (Ensifer meliloti).